The following is a 446-amino-acid chain: Histidine--tRNA ligase (446 aa).

Belongs to the class-II aminoacyl-tRNA synthetase family. Homodimer.

The protein localises to the cytoplasm. It catalyses the reaction tRNA(His) + L-histidine + ATP = L-histidyl-tRNA(His) + AMP + diphosphate + H(+). The chain is Histidine--tRNA ligase from Burkholderia vietnamiensis (strain G4 / LMG 22486) (Burkholderia cepacia (strain R1808)).